A 282-amino-acid chain; its full sequence is Undecaprenyl-diphosphatase (282 aa).

The next 5 helical transmembrane spans lie at 96-116, 123-143, 198-218, 229-249, and 260-280; these read WMVI…KDII, MWIT…AEKW, FLLA…DAFA, QLAV…AWLL, and FAAY…TGML.

It belongs to the UppP family.

Its subcellular location is the cell membrane. The enzyme catalyses di-trans,octa-cis-undecaprenyl diphosphate + H2O = di-trans,octa-cis-undecaprenyl phosphate + phosphate + H(+). Functionally, catalyzes the dephosphorylation of undecaprenyl diphosphate (UPP). Confers resistance to bacitracin. This is Undecaprenyl-diphosphatase from Corynebacterium diphtheriae (strain ATCC 700971 / NCTC 13129 / Biotype gravis).